The sequence spans 165 residues: Lipoprotein signal peptidase (165 aa).

A run of 3 helical transmembrane segments spans residues 9–29 (LLTI…VLLY), 69–89 (KYFL…FLFL), and 100–120 (FSLI…FFYN). Catalysis depends on residues aspartate 124 and aspartate 142. The helical transmembrane segment at 133-153 (WSFPTFNFADIFISLGTLIFV) threads the bilayer.

This sequence belongs to the peptidase A8 family.

It is found in the cell inner membrane. It catalyses the reaction Release of signal peptides from bacterial membrane prolipoproteins. Hydrolyzes -Xaa-Yaa-Zaa-|-(S,diacylglyceryl)Cys-, in which Xaa is hydrophobic (preferably Leu), and Yaa (Ala or Ser) and Zaa (Gly or Ala) have small, neutral side chains.. It functions in the pathway protein modification; lipoprotein biosynthesis (signal peptide cleavage). This protein specifically catalyzes the removal of signal peptides from prolipoproteins. This Chlamydia felis (strain Fe/C-56) (Chlamydophila felis) protein is Lipoprotein signal peptidase.